Here is a 331-residue protein sequence, read N- to C-terminus: Biotin synthase (331 aa).

Residues 48–278 (FDSQKFEFCS…SAELRLCGGR (231 aa)) form the Radical SAM core domain. Residues C66, C70, and C73 each contribute to the [4Fe-4S] cluster site. [2Fe-2S] cluster contacts are provided by C110, C143, C203, and R273.

Belongs to the radical SAM superfamily. Biotin synthase family. In terms of assembly, homodimer. It depends on [4Fe-4S] cluster as a cofactor. The cofactor is [2Fe-2S] cluster.

It carries out the reaction (4R,5S)-dethiobiotin + (sulfur carrier)-SH + 2 reduced [2Fe-2S]-[ferredoxin] + 2 S-adenosyl-L-methionine = (sulfur carrier)-H + biotin + 2 5'-deoxyadenosine + 2 L-methionine + 2 oxidized [2Fe-2S]-[ferredoxin]. The protein operates within cofactor biosynthesis; biotin biosynthesis; biotin from 7,8-diaminononanoate: step 2/2. Functionally, catalyzes the conversion of dethiobiotin (DTB) to biotin by the insertion of a sulfur atom into dethiobiotin via a radical-based mechanism. This chain is Biotin synthase, found in Hydrogenobaculum sp. (strain Y04AAS1).